We begin with the raw amino-acid sequence, 376 residues long: Quinolinate synthase (376 aa).

2 residues coordinate iminosuccinate: His57 and Ser78. Cys123 contributes to the [4Fe-4S] cluster binding site. Iminosuccinate contacts are provided by residues Tyr149–Asn151 and Ser166. Residue Cys210 participates in [4Fe-4S] cluster binding. Iminosuccinate contacts are provided by residues His236 to Glu238 and Thr253. Cys307 is a [4Fe-4S] cluster binding site.

This sequence belongs to the quinolinate synthase family. Type 1 subfamily. [4Fe-4S] cluster is required as a cofactor.

The protein resides in the cytoplasm. The catalysed reaction is iminosuccinate + dihydroxyacetone phosphate = quinolinate + phosphate + 2 H2O + H(+). It participates in cofactor biosynthesis; NAD(+) biosynthesis; quinolinate from iminoaspartate: step 1/1. Functionally, catalyzes the condensation of iminoaspartate with dihydroxyacetone phosphate to form quinolinate. This chain is Quinolinate synthase, found in Paraburkholderia phymatum (strain DSM 17167 / CIP 108236 / LMG 21445 / STM815) (Burkholderia phymatum).